A 212-amino-acid polypeptide reads, in one-letter code: EFC-associated protein OPG053 (212 aa).

At M1–D175 the chain is on the virion surface side. Disulfide bonds link C33–C55, C47–C127, and C107–C149. The helical transmembrane segment at P176–I196 threads the bilayer. Topologically, residues R197 to V212 are intravirion.

It belongs to the orthopoxvirus OPG053 family. As to quaternary structure, component of the entry fusion complex (EFC) composed of OPG053, OPG076, OPG086, OPG094, OPG095, OPG099, OPG107, OPG143, OPG104, OPG147 and OPG155. Except for OPG095 and OPG052, each of the EFC proteins is required for assembly or stability of the complex. Disulfid bonds are oxidized in the cytoplasm by OPG088 protein. Post-translationally, unglycosylated because produced in viral factories instead of the classic ER -Golgi route.

The protein resides in the virion membrane. Functionally, component of the entry fusion complex (EFC), which consists of 11 proteins. During cell infection, this complex mediates entry of the virion core into the host cytoplasm by a two-step mechanism consisting of lipid mixing of the viral and cellular membranes and subsequent pore formation. This Monkeypox virus protein is EFC-associated protein OPG053 (OPG053).